Reading from the N-terminus, the 715-residue chain is Polyribonucleotide nucleotidyltransferase (715 aa).

Mg(2+)-binding residues include Asp487 and Asp493. A KH domain is found at 554-613 (PRLYTFKINPEKIRDVIGKGGAVIRALTEETGTTIDIQDDGTITIAATSGEAAAAARSRI). Residues 623-691 (GKIYEGTVLK…DRGRVKLSMK (69 aa)) enclose the S1 motif domain.

Belongs to the polyribonucleotide nucleotidyltransferase family. Requires Mg(2+) as cofactor.

Its subcellular location is the cytoplasm. The catalysed reaction is RNA(n+1) + phosphate = RNA(n) + a ribonucleoside 5'-diphosphate. In terms of biological role, involved in mRNA degradation. Catalyzes the phosphorolysis of single-stranded polyribonucleotides processively in the 3'- to 5'-direction. The sequence is that of Polyribonucleotide nucleotidyltransferase from Dechloromonas aromatica (strain RCB).